Consider the following 424-residue polypeptide: Multifunctional CCA protein (424 aa).

G8 and R11 together coordinate ATP. Residues G8 and R11 each contribute to the CTP site. Residues D21 and D23 each contribute to the Mg(2+) site. Residues R91, R149, and R152 each coordinate ATP. CTP-binding residues include R91, R149, and R152. One can recognise an HD domain in the interval 238 to 339 (TGIHLMMVLD…VRLLERCDAF (102 aa)).

The protein belongs to the tRNA nucleotidyltransferase/poly(A) polymerase family. Bacterial CCA-adding enzyme type 1 subfamily. As to quaternary structure, monomer. Can also form homodimers and oligomers. The cofactor is Mg(2+). Requires Ni(2+) as cofactor.

It catalyses the reaction a tRNA precursor + 2 CTP + ATP = a tRNA with a 3' CCA end + 3 diphosphate. The catalysed reaction is a tRNA with a 3' CCA end + 2 CTP + ATP = a tRNA with a 3' CCACCA end + 3 diphosphate. Catalyzes the addition and repair of the essential 3'-terminal CCA sequence in tRNAs without using a nucleic acid template. Adds these three nucleotides in the order of C, C, and A to the tRNA nucleotide-73, using CTP and ATP as substrates and producing inorganic pyrophosphate. tRNA 3'-terminal CCA addition is required both for tRNA processing and repair. Also involved in tRNA surveillance by mediating tandem CCA addition to generate a CCACCA at the 3' terminus of unstable tRNAs. While stable tRNAs receive only 3'-terminal CCA, unstable tRNAs are marked with CCACCA and rapidly degraded. The protein is Multifunctional CCA protein of Polaromonas naphthalenivorans (strain CJ2).